We begin with the raw amino-acid sequence, 221 residues long: GTP cyclohydrolase 1 (221 aa).

The Zn(2+) site is built by C109, H112, and C180.

This sequence belongs to the GTP cyclohydrolase I family. In terms of assembly, toroid-shaped homodecamer, composed of two pentamers of five dimers.

It catalyses the reaction GTP + H2O = 7,8-dihydroneopterin 3'-triphosphate + formate + H(+). It participates in cofactor biosynthesis; 7,8-dihydroneopterin triphosphate biosynthesis; 7,8-dihydroneopterin triphosphate from GTP: step 1/1. This is GTP cyclohydrolase 1 from Blochmanniella pennsylvanica (strain BPEN).